Consider the following 201-residue polypeptide: Peptidyl-tRNA hydrolase (201 aa).

Tyr-15 is a tRNA binding site. The active-site Proton acceptor is His-20. Tyr-66, Asn-68, and Asn-114 together coordinate tRNA.

Belongs to the PTH family. In terms of assembly, monomer.

It localises to the cytoplasm. It catalyses the reaction an N-acyl-L-alpha-aminoacyl-tRNA + H2O = an N-acyl-L-amino acid + a tRNA + H(+). Its function is as follows. Hydrolyzes ribosome-free peptidyl-tRNAs (with 1 or more amino acids incorporated), which drop off the ribosome during protein synthesis, or as a result of ribosome stalling. Catalyzes the release of premature peptidyl moieties from peptidyl-tRNA molecules trapped in stalled 50S ribosomal subunits, and thus maintains levels of free tRNAs and 50S ribosomes. This Burkholderia mallei (strain ATCC 23344) protein is Peptidyl-tRNA hydrolase.